The chain runs to 296 residues: Putative peptide transport system permease protein BruAb2_1032 (296 aa).

6 helical membrane passes run 35 to 55 (IGLVLLLIVVLAAVLAPWITN), 97 to 117 (LWIGLTVAVLSAILGAIIGIA), 131 to 151 (VMDALMAFPAILLAIGISAAL), 205 to 225 (ILPNCLAPLLVTLTFVFAYAI), 229 to 249 (ATLSFLGIGTPPPHASWGSIV), and 260 to 280 (WWIMLFPGIAITISALAINLI). The region spanning 97-281 (LWIGLTVAVL…ISALAINLIG (185 aa)) is the ABC transmembrane type-1 domain.

The protein belongs to the binding-protein-dependent transport system permease family. In terms of assembly, the complex is composed of two ATP-binding proteins (BruAb2_1033 and BruAb2_1034), two transmembrane proteins (BruAb2_1031 and BruAb2_1032) and a solute-binding protein (BruAb2_1030).

It is found in the cell inner membrane. Its function is as follows. Probably part of an ABC transporter complex that could be involved in peptide import. Probably responsible for the translocation of the substrate across the membrane. This Brucella abortus biovar 1 (strain 9-941) protein is Putative peptide transport system permease protein BruAb2_1032.